The chain runs to 1426 residues: MWAAEAAFARSGSWREEEDEQEALRWAALQRLPTVARARRGLLRSPAPGEDRVQGDDALCEVDVAGLSPGDRTALVDRLLADSGDVEDFFRRIRSRFDAVQIEFPKIEVRYEDLTVDAYVHVGSRALPTIPNFICNMTEAFLRHLRIYRGGRVKLPILDNVSGIIRPSRMTLLLGPPSSGKTTLLLALAGRLGPGLKVSGNITYNGHHLNEFVPQRTSAYVSQQDWHASEMTVRETLEFAGRCQGVGIKYDMLVELLRREKNEGIKPDEDLDVFMKALALEGKQTSLVAEYIMKVYGLDICADTIVGDEMIKGISGGQKKRLTTGELLVGSARVLFMDEISTGLDSATTYQIIKYLRHSTHALDGTTIISLLQPAPETYELFDDVILISEGQIVYQGPREYAVDFFAGMGFRCPERKNVADFLQEVLSKKDQQQYWCHYDYPYQYVSVSKFAEAFKTFVIGKRLHDELAVPYNRHRNHPAALSTSNYGVRRLELLKSNFQWQHLLMKRNSFIYVFKFIQLLLVALITMTVFFRSTMHRDSVDDGIIYLGALYFAIVMILFNGFTEVSLLVTKLPILYKHRDLHFYPPWAYTLPSWLLSIPTSLIESGMWVLVTYYVVGYDPQFTRCLGQFLLLFFLHQTSLALFRVMASLGRNMIVANTFGSFALLVVMILGGFIITKESIPAWWIWGYWISPMMYAQNAISVNEFLGHSWSQQFANQNITLGEAILTGYGLFKEKYWFWIGVGALFGYAIVLNFLFTLFLTLLNPIGNIQAVVSKDDIQHRAPRRKNGKLALELRSYLHSASLNGHNLKDQKGMVLPFQPLSMCFKNINYYVDVPAELKSQGIVEDRLQLLIDVTGAFRPGILTALVGVSGAGKTTLMDVLAGRKTGGLIEGSITISGYPKNQETFTRISGYCEQNDVHSPCLTVIESLLYSACLRLPSHVDVNTRRVFVEEVMELVELNALSGALVGLPGVNGLSTEQRKRLTIAVELVANPSIVFMDEPTSGLDARSAAIVMRTVRNIVNTGRTIVCTIHQPSIDIFESFDELLFMKRGGQLIYAGPLGSKSRNLVEFFEAIPGVPKIRDGYNPAAWMLEVTSTQMEQILGVDFAEYYRQSKLFQQTQEMVDILSRPRRESKELTFATKYSQPFFAQYAACLWKQNLSYWRNPQYTAVRFFYTVIISLMFGTICWKFGSRRETQHDIFNAMGAMYAAVLFIGITNATSVQPVISIERFVSYRERAAGMYSALPFAFSLVTVEFPYILVQSLIYGTIFYSLGSFEWTAVKFLWYLFFMYFTLLYFTFYGMMTTAITPNHTVAPIIAAPFYTLWNLFCGFMIPRKRIPAWWRWYYWANPVSWTLYGLLTSQFGDLDQPLLLADGITTTTAVDFLRDHFGFRHDFLGVVAGMVAGFCVLFAVVFALAIKYLNFQRR.

The 274-residue stretch at 142 to 415 (LRHLRIYRGG…FAGMGFRCPE (274 aa)) folds into the ABC transporter 1 domain. 175 to 182 (GPPSSGKT) is an ATP binding site. The 214-residue stretch at 493–706 (ELLKSNFQWQ…AQNAISVNEF (214 aa)) folds into the ABC transmembrane type-2 1 domain. Transmembrane regions (helical) follow at residues 511-531 (FIYV…MTVF), 544-564 (GIIY…NGFT), 592-612 (LPSW…WVLV), 630-650 (FLLL…MASL), 655-675 (IVAN…GGFI), 681-701 (IPAW…QNAI), and 741-761 (IGVG…TLFL). Residues 824-1076 (MCFKNINYYV…NLVEFFEAIP (253 aa)) form the ABC transporter 2 domain. ATP is bound at residue 869-876 (GVSGAGKT). Positions 1149 to 1363 (AQYAACLWKQ…TLYGLLTSQF (215 aa)) constitute an ABC transmembrane type-2 2 domain. The next 7 helical transmembrane spans lie at 1168–1188 (YTAV…TICW), 1200–1220 (IFNA…TNAT), 1245–1265 (LPFA…QSLI), 1283–1303 (FLWY…YGMM), 1313–1333 (VAPI…GFMI), 1341–1363 (WWRW…TSQF), and 1398–1418 (VVAG…ALAI).

It belongs to the ABC transporter superfamily. ABCG family. PDR (TC 3.A.1.205) subfamily.

Its subcellular location is the membrane. Its function is as follows. May be a general defense protein. This Oryza sativa subsp. japonica (Rice) protein is ABC transporter G family member 31.